Reading from the N-terminus, the 288-residue chain is Putative aryl-alcohol dehydrogenase AAD10 (288 aa).

The protein belongs to the aldo/keto reductase family. Aldo/keto reductase 2 subfamily.

This Saccharomyces cerevisiae (strain ATCC 204508 / S288c) (Baker's yeast) protein is Putative aryl-alcohol dehydrogenase AAD10 (AAD10).